Consider the following 141-residue polypeptide: Small ribosomal subunit protein bS18c (141 aa).

Disordered regions lie at residues 14 to 55 and 120 to 141; these read EFIA…IKPG and IKRR…RPKK. Over residues 24–34 the composition is skewed to pro residues; that stretch reads PKAPLQPPLPP. Positions 35–51 are enriched in basic residues; sequence SKRKGKPPKSPRRRSSR.

It belongs to the bacterial ribosomal protein bS18 family. As to quaternary structure, part of the 30S ribosomal subunit.

The protein localises to the plastid. It localises to the chloroplast. The chain is Small ribosomal subunit protein bS18c from Pelargonium hortorum (Common geranium).